The primary structure comprises 229 residues: NAD-dependent protein deacetylase (229 aa).

In terms of domain architecture, Deacetylase sirtuin-type spans 1–229 (MNNLKEAIKQ…NDAVKVFAEI (229 aa)). 10 residues coordinate NAD(+): Ala-20, Arg-32, Gln-96, Ile-98, Asp-99, His-114, Thr-181, Ser-182, Asn-205, and Val-223. Residues Ile-98 and Asp-99 each coordinate nicotinamide. Catalysis depends on His-114, which acts as the Proton acceptor.

This sequence belongs to the sirtuin family. Class U subfamily.

The protein resides in the cytoplasm. It carries out the reaction N(6)-acetyl-L-lysyl-[protein] + NAD(+) + H2O = 2''-O-acetyl-ADP-D-ribose + nicotinamide + L-lysyl-[protein]. Its function is as follows. NAD-dependent protein deacetylase which modulates the activities of several enzymes which are inactive in their acetylated form. The chain is NAD-dependent protein deacetylase from Listeria innocua serovar 6a (strain ATCC BAA-680 / CLIP 11262).